Reading from the N-terminus, the 384-residue chain is MAKHLFTSESVSEGHPDKIADQISDAVLDAILQQDPKARVACETYVKTGMVLVGGEITTSAWVDIEEITRNTVREIGYVHSDMGFDANSCAVLSAIGKQSPDINQGVDRADPLEQGAGDQGLMFGYATNETDVLMPAPVTYAHRLVQRQAEVRKNGTLPWLRPDAKSQVTFQYDDGKIVGIDAVVLSTQHAEDIDQKSLQEAVMEEIIKPILPSEWLNTSTKFFINPTGRFVIGGPMGDCGLTGRKIIVDTYGGMARHGGGAFSGKDPSKVDRSAAYAARYVAKNIVAAGLADRCEIQVSYAIGVAEPTSIMVETFGTEKVPAEQLILLVREFFDLRPYGLIQMLDLLHPIYKETAAYGHFGRENFPWEKTDKAQLLRDAAGLK.

His15 serves as a coordination point for ATP. Residue Asp17 coordinates Mg(2+). Position 43 (Glu43) interacts with K(+). Positions 56 and 99 each coordinate L-methionine. Residues 99-109 are flexible loop; it reads QSPDINQGVDR. ATP contacts are provided by residues 164-166, 230-231, Asp239, 245-246, Ala262, and Lys266; these read DAK, RF, and RK. Position 239 (Asp239) interacts with L-methionine. Residue Lys270 participates in L-methionine binding.

It belongs to the AdoMet synthase family. As to quaternary structure, homotetramer; dimer of dimers. Mg(2+) serves as cofactor. Requires K(+) as cofactor.

The protein localises to the cytoplasm. The enzyme catalyses L-methionine + ATP + H2O = S-adenosyl-L-methionine + phosphate + diphosphate. Its pathway is amino-acid biosynthesis; S-adenosyl-L-methionine biosynthesis; S-adenosyl-L-methionine from L-methionine: step 1/1. In terms of biological role, catalyzes the formation of S-adenosylmethionine (AdoMet) from methionine and ATP. The overall synthetic reaction is composed of two sequential steps, AdoMet formation and the subsequent tripolyphosphate hydrolysis which occurs prior to release of AdoMet from the enzyme. The protein is S-adenosylmethionine synthase of Salmonella agona (strain SL483).